Here is a 101-residue protein sequence, read N- to C-terminus: NAD(P)H-quinone oxidoreductase subunit 4L, chloroplastic (101 aa).

3 helical membrane-spanning segments follow: residues 2–22 (ILEH…YGLI), 30–52 (ALMC…SDFF), and 61–81 (IFSI…LAIV).

This sequence belongs to the complex I subunit 4L family. In terms of assembly, NDH is composed of at least 16 different subunits, 5 of which are encoded in the nucleus.

The protein resides in the plastid. It is found in the chloroplast thylakoid membrane. It catalyses the reaction a plastoquinone + NADH + (n+1) H(+)(in) = a plastoquinol + NAD(+) + n H(+)(out). It carries out the reaction a plastoquinone + NADPH + (n+1) H(+)(in) = a plastoquinol + NADP(+) + n H(+)(out). In terms of biological role, NDH shuttles electrons from NAD(P)H:plastoquinone, via FMN and iron-sulfur (Fe-S) centers, to quinones in the photosynthetic chain and possibly in a chloroplast respiratory chain. The immediate electron acceptor for the enzyme in this species is believed to be plastoquinone. Couples the redox reaction to proton translocation, and thus conserves the redox energy in a proton gradient. The sequence is that of NAD(P)H-quinone oxidoreductase subunit 4L, chloroplastic from Oenothera glazioviana (Large-flowered evening primrose).